A 539-amino-acid chain; its full sequence is Protein TIC 55, chloroplastic (539 aa).

A chloroplast-targeting transit peptide spans 1 to 50; the sequence is MAVPFLSSSLQLTPTSPILFTKVTPTPIIHNHRSTCTIPTKPRLRLLRRS. Position 51 is an N-acetylalanine (Ala51). Topologically, residues 51-482 are stromal; that stretch reads AVAGTAVSDQ…VIKSFELWKN (432 aa). A Rieske domain is found at 88–193; sequence WYPLYLTKNV…VKDSQGVVWV (106 aa). [2Fe-2S] cluster contacts are provided by Cys129, His131, Cys148, and His151. His242 and His247 together coordinate Fe cation. Positions 467–470 match the Redox-active motif motif; it reads CRSC. The helical transmembrane segment at 483–500 threads the bilayer; the sequence is ILSATAVALTALAILVVS. Over 501 to 504 the chain is Chloroplast intermembrane; it reads RQWK. A helical membrane pass occupies residues 505–527; that stretch reads AVLLGSAALCSAAAYTCLRAINL. The Stromal portion of the chain corresponds to 528 to 539; it reads NTNNFIRTHRRL.

Part of the Tic complex. Interacts with TIC62 and TIC110. The cofactor is [2Fe-2S] cluster. In terms of tissue distribution, highly expressed in green tissues and very low levels in non-photosynthetic tissues such as roots and etiolated seedlings.

It is found in the plastid. The protein resides in the chloroplast inner membrane. Functionally, involved in protein precursor import into chloroplasts. Part of the redox regulon consisting of TIC32, TIC 55 and TIC62. The protein is Protein TIC 55, chloroplastic (TIC55) of Arabidopsis thaliana (Mouse-ear cress).